The following is a 1031-amino-acid chain: Putative glycine dehydrogenase (decarboxylating), mitochondrial (1031 aa).

The N-terminal 49 residues, 1–49 (MFDSFMKRNQLALIMFRACSKLQYHGVNTSLSRHLFLAKRNLSISSACL), are a transit peptide targeting the mitochondrion. An N6-(pyridoxal phosphate)lysine modification is found at lysine 783.

It belongs to the GcvP family. The cofactor is pyridoxal 5'-phosphate.

Its subcellular location is the mitochondrion. It carries out the reaction N(6)-[(R)-lipoyl]-L-lysyl-[glycine-cleavage complex H protein] + glycine + H(+) = N(6)-[(R)-S(8)-aminomethyldihydrolipoyl]-L-lysyl-[glycine-cleavage complex H protein] + CO2. Functionally, the glycine cleavage system catalyzes the degradation of glycine. The P protein binds the alpha-amino group of glycine through its pyridoxal phosphate cofactor; CO(2) is released and the remaining methylamine moiety is then transferred to the lipoamide cofactor of the H protein. In Schizosaccharomyces pombe (strain 972 / ATCC 24843) (Fission yeast), this protein is Putative glycine dehydrogenase (decarboxylating), mitochondrial (gcv2).